The following is a 1271-amino-acid chain: ATP-dependent helicase/nuclease subunit A (1271 aa).

Residues 3–476 (TKWTEEQELA…IMLYKNFRSR (474 aa)) enclose the UvrD-like helicase ATP-binding domain. Position 24 to 31 (24 to 31 (AAAGSGKT)) interacts with ATP. One can recognise a UvrD-like helicase C-terminal domain in the interval 528 to 824 (IENLKVAGDI…RIMSIHKSKG (297 aa)).

It belongs to the helicase family. AddA subfamily. Heterodimer of AddA and AddB/RexB. The cofactor is Mg(2+).

It catalyses the reaction Couples ATP hydrolysis with the unwinding of duplex DNA by translocating in the 3'-5' direction.. The catalysed reaction is ATP + H2O = ADP + phosphate + H(+). In terms of biological role, the heterodimer acts as both an ATP-dependent DNA helicase and an ATP-dependent, dual-direction single-stranded exonuclease. Recognizes the chi site generating a DNA molecule suitable for the initiation of homologous recombination. The AddA nuclease domain is required for chi fragment generation; this subunit has the helicase and 3' -&gt; 5' nuclease activities. The polypeptide is ATP-dependent helicase/nuclease subunit A (Clostridium perfringens (strain ATCC 13124 / DSM 756 / JCM 1290 / NCIMB 6125 / NCTC 8237 / Type A)).